We begin with the raw amino-acid sequence, 846 residues long: Vinculin (846 aa).

Residues Met-1–Glu-257 form an interaction with TLN region. Residues Arg-315–Glu-370 are a coiled coil. The interval Trp-617–Leu-646 is disordered.

This sequence belongs to the vinculin/alpha-catenin family. Monomer. Interacts with TLN (talin); the interaction facilitates VIN1 binding to F-actin. Expressed in epithelial tissues, specifically the pinacoderm (outer epithelium) and choanoderm (feeding epithelium) (at protein level). Also detected in migratory cells of the mesohyl (at protein level).

Its subcellular location is the cytoplasm. It is found in the cell cortex. The protein localises to the cell projection. It localises to the filopodium. The protein resides in the cytoskeleton. Functionally, actin filament (F-actin)-binding protein which may play a role in cell-cell adhesion. In Oscarella pearsei (Sponge), this protein is Vinculin.